A 397-amino-acid polypeptide reads, in one-letter code: DNA-directed RNA polymerase subunit Rpo1C (397 aa).

Belongs to the RNA polymerase beta' chain family. As to quaternary structure, part of the RNA polymerase complex.

It is found in the cytoplasm. It catalyses the reaction RNA(n) + a ribonucleoside 5'-triphosphate = RNA(n+1) + diphosphate. DNA-dependent RNA polymerase (RNAP) catalyzes the transcription of DNA into RNA using the four ribonucleoside triphosphates as substrates. Forms part of the jaw domain. The sequence is that of DNA-directed RNA polymerase subunit Rpo1C from Halobacterium salinarum (strain ATCC 29341 / DSM 671 / R1).